A 443-amino-acid chain; its full sequence is Trigger factor (443 aa).

The region spanning 168–254 (GDFVTIDFEG…IKNLKEKKLP (87 aa)) is the PPIase FKBP-type domain.

It belongs to the FKBP-type PPIase family. Tig subfamily.

Its subcellular location is the cytoplasm. The catalysed reaction is [protein]-peptidylproline (omega=180) = [protein]-peptidylproline (omega=0). Functionally, involved in protein export. Acts as a chaperone by maintaining the newly synthesized protein in an open conformation. Functions as a peptidyl-prolyl cis-trans isomerase. This chain is Trigger factor, found in Syntrophus aciditrophicus (strain SB).